The primary structure comprises 805 residues: Hypoxia-inducible factor 1-alpha (805 aa).

The segment at 1-26 (MEGSVVVSEKKRISSERRKEKSRDAA) is disordered. Positions 8–26 (SEKKRISSERRKEKSRDAA) are enriched in basic and acidic residues. The region spanning 17–70 (RRKEKSRDAARCRRSNESEVFYELSHELPLPHNVSSHLDKASIMRLDHQLPAVE) is the bHLH domain. PAS domains lie at 85–157 (DKQL…PAKK) and 229–300 (PHPS…TKGQ). A PAC domain is found at 303-346 (TGQYRMLAKKGGYVWVETQATVIYNSKNSQPQCIVCVNYVLSEV). Pro-404 and Pro-560 each carry 4-hydroxyproline. The disordered stretch occupies residues 628 to 669 (KESTSAPVSPYNGNRSRTSSPVRPAKAVVDKTEKSRPGTPNL). A compositionally biased stretch (polar residues) spans 629-648 (ESTSAPVSPYNGNRSRTSSP). A (3S)-3-hydroxyasparagine modification is found at Asn-782.

Efficient DNA binding requires heterodimerization of an alpha and a beta/ARNT subunit. In terms of processing, in normoxia, is hydroxylated on Pro-404 and Pro-560. The hydroxylated prolines promote interaction with VHL, initiating rapid ubiquitination and subsequent proteasomal degradation. Under hypoxia, proline hydroxylation is impaired and ubiquitination is attenuated, resulting in stabilization. Post-translationally, in normoxia, is hydroxylated on Asn-782, thus abrogating interaction with CREBBP and EP300 and preventing transcriptional activation. The iron and 2-oxoglutarate dependent 3-hydroxylation of asparagine is (S) stereospecific within HIF CTAD domains.

It is found in the cytoplasm. The protein localises to the nucleus. The protein resides in the nucleus speckle. Induced by reactive oxygen species (ROS). Functions as a master transcriptional regulator of the adaptive response to hypoxia. Under hypoxic conditions, activates the transcription of over 40 genes, including erythropoietin, glucose transporters, glycolytic enzymes, vascular endothelial growth factor, HILPDA, and other genes whose protein products increase oxygen delivery or facilitate metabolic adaptation to hypoxia. Plays an essential role in embryonic vascularization, tumor angiogenesis and pathophysiology of ischemic disease. This chain is Hypoxia-inducible factor 1-alpha (hif1a), found in Xenopus laevis (African clawed frog).